Consider the following 165-residue polypeptide: Peptide methionine sulfoxide reductase MsrA (165 aa).

C10 is a catalytic residue.

Belongs to the MsrA Met sulfoxide reductase family.

The catalysed reaction is L-methionyl-[protein] + [thioredoxin]-disulfide + H2O = L-methionyl-(S)-S-oxide-[protein] + [thioredoxin]-dithiol. The enzyme catalyses [thioredoxin]-disulfide + L-methionine + H2O = L-methionine (S)-S-oxide + [thioredoxin]-dithiol. In terms of biological role, has an important function as a repair enzyme for proteins that have been inactivated by oxidation. Catalyzes the reversible oxidation-reduction of methionine sulfoxide in proteins to methionine. This chain is Peptide methionine sulfoxide reductase MsrA, found in Campylobacter jejuni subsp. jejuni serotype O:6 (strain 81116 / NCTC 11828).